Reading from the N-terminus, the 514-residue chain is Ferrochelatase-2, chloroplastic (514 aa).

This sequence belongs to the ferrochelatase family.

It is found in the plastid. It localises to the chloroplast. It catalyses the reaction heme b + 2 H(+) = protoporphyrin IX + Fe(2+). It participates in porphyrin-containing compound metabolism; protoheme biosynthesis; protoheme from protoporphyrin-IX: step 1/1. In terms of biological role, catalyzes the ferrous insertion into protoporphyrin IX. The polypeptide is Ferrochelatase-2, chloroplastic (HEMH) (Cucumis sativus (Cucumber)).